Reading from the N-terminus, the 561-residue chain is Dihydroxy-acid dehydratase (561 aa).

C50 contacts [2Fe-2S] cluster. D82 lines the Mg(2+) pocket. C123 lines the [2Fe-2S] cluster pocket. Mg(2+) contacts are provided by D124 and K125. K125 carries the N6-carboxylysine modification. C195 contacts [2Fe-2S] cluster. E447 is a binding site for Mg(2+). The active-site Proton acceptor is S473.

This sequence belongs to the IlvD/Edd family. As to quaternary structure, homodimer. Requires [2Fe-2S] cluster as cofactor. It depends on Mg(2+) as a cofactor.

The enzyme catalyses (2R)-2,3-dihydroxy-3-methylbutanoate = 3-methyl-2-oxobutanoate + H2O. It carries out the reaction (2R,3R)-2,3-dihydroxy-3-methylpentanoate = (S)-3-methyl-2-oxopentanoate + H2O. It participates in amino-acid biosynthesis; L-isoleucine biosynthesis; L-isoleucine from 2-oxobutanoate: step 3/4. Its pathway is amino-acid biosynthesis; L-valine biosynthesis; L-valine from pyruvate: step 3/4. Its function is as follows. Functions in the biosynthesis of branched-chain amino acids. Catalyzes the dehydration of (2R,3R)-2,3-dihydroxy-3-methylpentanoate (2,3-dihydroxy-3-methylvalerate) into 2-oxo-3-methylpentanoate (2-oxo-3-methylvalerate) and of (2R)-2,3-dihydroxy-3-methylbutanoate (2,3-dihydroxyisovalerate) into 2-oxo-3-methylbutanoate (2-oxoisovalerate), the penultimate precursor to L-isoleucine and L-valine, respectively. The chain is Dihydroxy-acid dehydratase from Chloroflexus aurantiacus (strain ATCC 29366 / DSM 635 / J-10-fl).